Here is a 268-residue protein sequence, read N- to C-terminus: Ribosomal RNA small subunit methyltransferase A (268 aa).

S-adenosyl-L-methionine contacts are provided by asparagine 18, leucine 20, glycine 45, glutamate 66, aspartate 91, and asparagine 112.

The protein belongs to the class I-like SAM-binding methyltransferase superfamily. rRNA adenine N(6)-methyltransferase family. RsmA subfamily.

The protein localises to the cytoplasm. It catalyses the reaction adenosine(1518)/adenosine(1519) in 16S rRNA + 4 S-adenosyl-L-methionine = N(6)-dimethyladenosine(1518)/N(6)-dimethyladenosine(1519) in 16S rRNA + 4 S-adenosyl-L-homocysteine + 4 H(+). Specifically dimethylates two adjacent adenosines (A1518 and A1519) in the loop of a conserved hairpin near the 3'-end of 16S rRNA in the 30S particle. May play a critical role in biogenesis of 30S subunits. This Vibrio vulnificus (strain CMCP6) protein is Ribosomal RNA small subunit methyltransferase A.